Here is a 395-residue protein sequence, read N- to C-terminus: Probable FMNH2-dependent monooxygenase SfnC (395 aa).

Involved in the dimethyl sulfide degradation pathway. In Pseudomonas putida (Arthrobacter siderocapsulatus), this protein is Probable FMNH2-dependent monooxygenase SfnC.